The following is a 147-amino-acid chain: Methylated-DNA--protein-cysteine methyltransferase (147 aa).

Cys-112 functions as the Nucleophile; methyl group acceptor in the catalytic mechanism.

This sequence belongs to the MGMT family.

The protein localises to the cytoplasm. The catalysed reaction is a 6-O-methyl-2'-deoxyguanosine in DNA + L-cysteinyl-[protein] = S-methyl-L-cysteinyl-[protein] + a 2'-deoxyguanosine in DNA. It carries out the reaction a 4-O-methyl-thymidine in DNA + L-cysteinyl-[protein] = a thymidine in DNA + S-methyl-L-cysteinyl-[protein]. In terms of biological role, involved in the cellular defense against the biological effects of O6-methylguanine (O6-MeG) and O4-methylthymine (O4-MeT) in DNA. Repairs the methylated nucleobase in DNA by stoichiometrically transferring the methyl group to a cysteine residue in the enzyme. This is a suicide reaction: the enzyme is irreversibly inactivated. In Archaeoglobus fulgidus (strain ATCC 49558 / DSM 4304 / JCM 9628 / NBRC 100126 / VC-16), this protein is Methylated-DNA--protein-cysteine methyltransferase.